The sequence spans 448 residues: Fumarate hydratase class II (448 aa).

Substrate is bound by residues 83–85 (SGT), 113–116 (HPND), 123–125 (SSN), and Thr171. Residue His172 is the Proton donor/acceptor of the active site. Residue Ser302 is part of the active site. Residues Ser303 and 308-310 (KVN) each bind substrate.

This sequence belongs to the class-II fumarase/aspartase family. Fumarase subfamily. As to quaternary structure, homotetramer.

It localises to the cytoplasm. The catalysed reaction is (S)-malate = fumarate + H2O. It functions in the pathway carbohydrate metabolism; tricarboxylic acid cycle; (S)-malate from fumarate: step 1/1. In terms of biological role, involved in the TCA cycle. Catalyzes the stereospecific interconversion of fumarate to L-malate. This is Fumarate hydratase class II from Blochmanniella floridana.